Consider the following 180-residue polypeptide: Probable DNA replication complex GINS protein PSF2 (180 aa).

It belongs to the GINS2/PSF2 family. Component of the GINS complex which is a heterotetramer of gins1, gins2, gins3 and gins4.

It localises to the nucleus. In terms of biological role, required for correct functioning of the GINS complex, a complex that plays an essential role in the initiation of DNA replication, and progression of DNA replication forks. GINS complex is a core component of CDC45-MCM-GINS (CMG) helicase, the molecular machine that unwinds template DNA during replication, and around which the replisome is built. The polypeptide is Probable DNA replication complex GINS protein PSF2 (psf-2) (Caenorhabditis elegans).